The primary structure comprises 217 residues: Large ribosomal subunit protein uL1 (217 aa).

It belongs to the universal ribosomal protein uL1 family.

The polypeptide is Large ribosomal subunit protein uL1 (RpL10A) (Spodoptera frugiperda (Fall armyworm)).